Reading from the N-terminus, the 1582-residue chain is MAGPGGWRDREVTDLGHLPDPTGIFSLDKTIGLGTYGRIYLGLHEKTGAFTAVKVMNARKTPLPEIGRRVRVNKYQKSVGWRYSDEEEDLRTELNLLRKYSFHKNIVSFYGAFFKLSPPGQRHQLWMVMELCAAGSVTDVVRMTSNQSLKEDWIAYICREILQGLAHLHAHRVIHRDIKGQNVLLTHNAEVKLVDFGVSAQVSRTNGRRNSFIGTPYWMAPEVIDCDEDPRRSYDYRSDVWSVGITAIEMAEGAPPLCNLQPLEALFVILRESAPTVKSSGWSRKFHNFMEKCTIKNFLFRPTSANMLQHPFVRDIKNERHVVESLTRHLTGIIKKRQKKGIPLIFEREEAIKEQYTVRRFRGPSCTHELLRLPTSSRCRPLRVLHGEPSQPRWLPDREEPQVQALQQLQGAARVFMPLQALDSAPKPLKGQAQAPQRLQGAARVFMPLQAQVKAKASKPLQMQIKAPPRLRRAARVLMPLQAQVRAPRLLQVQSQVSKKQQAQTQTSEPQDLDQVPEEFQGQDQVPEQQRQGQAPEQQQRHNQVPEQELEQNQAPEQPEVQEQAAEPAQAETEAEEPESLRVNAQVFLPLLSQDHHVLLPLHLDTQVLIPVEGQTEGSPQAQAWTLEPPQAIGSVQALIEGLSRDLLRAPNSNNSKPLGPLQTLMENLSSNRFYSQPEQAREKKSKVSTLRQALAKRLSPKRFRAKSSWRPEKLELSDLEARRQRRQRRWEDIFNQHEEELRQVDKDKEDESSDNDEVFHSIQAEVQIEPLKPYISNPKKIEVQERSPSVPNNQDHAHHVKFSSSVPQRSLLEQAQKPIDIRQRSSQNRQNWLAASESSSEEESPVTGRRSQSSPPYSTIDQKLLVDIHVPDGFKVGKISPPVYLTNEWVGYNALSEIFRNDWLTPAPVIQPPEEDGDYVELYDASADTDGDDDDESNDTFEDTYDHANGNDDLDNQVDQANDVCKDHDDDNNKFVDDVNNNYYEAPSCPRASYGRDGSCKQDGYDGSRGKEEAYRGYGSHTANRSHGGSAASEDNAAIGDQEEHAANIGSERRGSEGDGGKGVVRTSEESGALGLNGEENCSETDGPGLKRPASQDFEYLQEEPGGGNEASNAIDSGAAPSAPDHESDNKDISESSTQSDFSANHSSPSKGSGMSADANFASAILYAGFVEVPEESPKQPSEVNVNPLYVSPACKKPLIHMYEKEFTSEICCGSLWGVNLLLGTRSNLYLMDRSGKADITKLIRRRPFRQIQVLEPLNLLITISGHKNRLRVYHLTWLRNKILNNDPESKRRQEEMLKTEEACKAIDKLTGCEHFSVLQHEETTYIAIALKSSIHLYAWAPKSFDESTAIKVCIDQSADSEGDYMSYQAYIRILAKIQAADPVNRFKRPDELLHLLKLKVFPTLDHKPVTVDLAIGSEKRLKIFFSSADGYHLIDAESEVMSDVTLPKNPLEIIIPQNIIILPDCLGIGMMLTFNAEALSVEANEQLFKKILEMWKDIPSSIAFECTQRTTGWGQKAIEVRSLQSRVLESELKRRSIKKLRFLCTRGDKLFFTSTLRNHHSRVYFMTLGKLEELQSNYDV.

Residues 25–313 (FSLDKTIGLG…SANMLQHPFV (289 aa)) enclose the Protein kinase domain. ATP is bound by residues 31–39 (IGLGTYGRI) and Lys-54. Asp-177 (proton acceptor) is an active-site residue. Composition is skewed to low complexity over residues 492–507 (QVQS…QTQT), 527–538 (PEQQRQGQAPEQ), and 551–572 (EQNQ…AQAE). The segment at 492 to 579 (QVQSQVSKKQ…QAETEAEEPE (88 aa)) is disordered. Residues 725-759 (QRRQRRWEDIFNQHEEELRQVDKDKEDESSDNDEV) adopt a coiled-coil conformation. 2 disordered regions span residues 783–859 (EVQE…PPYS) and 926–1156 (ASAD…GSGM). Composition is skewed to polar residues over residues 803–814 (FSSSVPQRSLLE), 825–834 (RSSQNRQNWL), and 850–859 (RRSQSSPPYS). Phosphoserine occurs at positions 852 and 855. The segment covering 926 to 944 (ASADTDGDDDDESNDTFED) has biased composition (acidic residues). Basic and acidic residues-rich tracts occupy residues 965 to 978 (VCKD…KFVD) and 999 to 1016 (GSCK…EEAY). Phosphoserine is present on residues Ser-1027, Ser-1031, and Ser-1034. Composition is skewed to basic and acidic residues over residues 1043-1061 (QEEH…EGDG) and 1125-1135 (PDHESDNKDIS). A compositionally biased stretch (polar residues) spans 1136-1154 (ESSTQSDFSANHSSPSKGS). Positions 1209–1552 (TSEICCGSLW…RFLCTRGDKL (344 aa)) constitute a CNH domain.

This sequence belongs to the protein kinase superfamily. STE Ser/Thr protein kinase family. STE20 subfamily.

The catalysed reaction is L-seryl-[protein] + ATP = O-phospho-L-seryl-[protein] + ADP + H(+). The enzyme catalyses L-threonyl-[protein] + ATP = O-phospho-L-threonyl-[protein] + ADP + H(+). Its function is as follows. May phosphorylate cofilin-1 and induce actin polymerization through this process, during the late stages of embryogenesis. Involved in the TNF-alpha-induced signaling pathway. In Homo sapiens (Human), this protein is Nik-related protein kinase (NRK).